We begin with the raw amino-acid sequence, 450 residues long: Tubulin alpha-1 chain (450 aa).

A GTP-binding site is contributed by glutamine 11. Lysine 40 carries the post-translational modification N6-acetyllysine. GTP-binding residues include glutamate 71, serine 140, glycine 144, threonine 145, threonine 179, asparagine 206, and asparagine 228. Glutamate 71 contributes to the Mg(2+) binding site. Glutamate 254 is a catalytic residue.

It belongs to the tubulin family. Dimer of alpha and beta chains. A typical microtubule is a hollow water-filled tube with an outer diameter of 25 nm and an inner diameter of 15 nM. Alpha-beta heterodimers associate head-to-tail to form protofilaments running lengthwise along the microtubule wall with the beta-tubulin subunit facing the microtubule plus end conferring a structural polarity. Microtubules usually have 13 protofilaments but different protofilament numbers can be found in some organisms and specialized cells. Interacts with Ote. Mg(2+) serves as cofactor. In terms of processing, undergoes a tyrosination/detyrosination cycle, the cyclic removal and re-addition of a C-terminal tyrosine residue by the enzymes tubulin tyrosine carboxypeptidase (TTCP) and tubulin tyrosine ligase (TTL), respectively. Post-translationally, acetylation of alpha chains at Lys-40 stabilizes microtubules and affects affinity and processivity of microtubule motors. This modification has a role in multiple cellular functions, ranging from cell motility, cell cycle progression or cell differentiation to intracellular trafficking and signaling. During the early stages of oogenesis lky/Alpha-tubulin N-acetyltransferase 2 is the main acetyltransferase responsible for Lys-40 acetylation in germline cells while Atat/alpha-tubulin N-acetyltransferase 1 is the main acetyltransferase responsible for Lys-40 acetylation in somatic cells.

The protein resides in the cytoplasm. It localises to the cytoskeleton. The enzyme catalyses GTP + H2O = GDP + phosphate + H(+). In terms of biological role, tubulin is the major constituent of microtubules, a cylinder consisting of laterally associated linear protofilaments composed of alpha- and beta-tubulin heterodimers. Microtubules grow by the addition of GTP-tubulin dimers to the microtubule end, where a stabilizing cap forms. Below the cap, tubulin dimers are in GDP-bound state, owing to GTPase activity of alpha-tubulin. This is Tubulin alpha-1 chain (alphaTub84B) from Drosophila melanogaster (Fruit fly).